A 500-amino-acid chain; its full sequence is Probable cytosol aminopeptidase (500 aa).

Lys264 and Asp269 together coordinate Mn(2+). Lys276 is a catalytic residue. Positions 287, 346, and 348 each coordinate Mn(2+). Arg350 is a catalytic residue.

Belongs to the peptidase M17 family. It depends on Mn(2+) as a cofactor.

The protein resides in the cytoplasm. It catalyses the reaction Release of an N-terminal amino acid, Xaa-|-Yaa-, in which Xaa is preferably Leu, but may be other amino acids including Pro although not Arg or Lys, and Yaa may be Pro. Amino acid amides and methyl esters are also readily hydrolyzed, but rates on arylamides are exceedingly low.. The enzyme catalyses Release of an N-terminal amino acid, preferentially leucine, but not glutamic or aspartic acids.. Its function is as follows. Presumably involved in the processing and regular turnover of intracellular proteins. Catalyzes the removal of unsubstituted N-terminal amino acids from various peptides. This is Probable cytosol aminopeptidase from Rickettsia canadensis (strain McKiel).